Consider the following 120-residue polypeptide: Large ribosomal subunit protein uL22 (120 aa).

Belongs to the universal ribosomal protein uL22 family. In terms of assembly, part of the 50S ribosomal subunit.

Its function is as follows. This protein binds specifically to 23S rRNA; its binding is stimulated by other ribosomal proteins, e.g. L4, L17, and L20. It is important during the early stages of 50S assembly. It makes multiple contacts with different domains of the 23S rRNA in the assembled 50S subunit and ribosome. The globular domain of the protein is located near the polypeptide exit tunnel on the outside of the subunit, while an extended beta-hairpin is found that lines the wall of the exit tunnel in the center of the 70S ribosome. The protein is Large ribosomal subunit protein uL22 of Corynebacterium urealyticum (strain ATCC 43042 / DSM 7109).